A 429-amino-acid polypeptide reads, in one-letter code: Phosphoribosylamine--glycine ligase (429 aa).

In terms of domain architecture, ATP-grasp spans 109–316; sequence KDFLARHQIP…LVDLCLAAID (208 aa). 135–196 contacts ATP; that stretch reads VREQGAPIVV…EEFLDGEEAS (62 aa). The interval 212 to 235 is disordered; it reads SQDHKRVGDKDTGPNTGGMGAYSP. Over residues 213–223 the composition is skewed to basic and acidic residues; the sequence is QDHKRVGDKDT. 2 residues coordinate Mg(2+): glutamate 286 and asparagine 288.

The protein belongs to the GARS family. It depends on Mg(2+) as a cofactor. Mn(2+) serves as cofactor.

The enzyme catalyses 5-phospho-beta-D-ribosylamine + glycine + ATP = N(1)-(5-phospho-beta-D-ribosyl)glycinamide + ADP + phosphate + H(+). The protein operates within purine metabolism; IMP biosynthesis via de novo pathway; N(1)-(5-phospho-D-ribosyl)glycinamide from 5-phospho-alpha-D-ribose 1-diphosphate: step 2/2. This is Phosphoribosylamine--glycine ligase from Vibrio parahaemolyticus serotype O3:K6 (strain RIMD 2210633).